A 685-amino-acid chain; its full sequence is Serotransferrin (685 aa).

The signal sequence occupies residues 1 to 16 (MKPLLLLPLLGCLATI). 2 consecutive Transferrin-like domains span residues 23–329 (VKWC…ALKI) and 340–666 (MKWC…SLRT). An intrachain disulfide couples Cys-26 to Cys-48. Fe(3+) contacts are provided by Asp-72 and Tyr-102. Disulfide bonds link Cys-125–Cys-206, Cys-170–Cys-184, and Cys-234–Cys-248. Thr-127, Lys-131, Ala-133, and Gly-134 together coordinate hydrogencarbonate. Position 200 (Tyr-200) interacts with Fe(3+). Residue His-256 participates in Fe(3+) binding. Disulfide bonds link Cys-343–Cys-379 and Cys-353–Cys-370. 2 residues coordinate Fe(3+): Asp-394 and Tyr-428. 7 disulfide bridges follow: Cys-404-Cys-678, Cys-419-Cys-639, Cys-451-Cys-526, Cys-475-Cys-667, Cys-485-Cys-499, Cys-496-Cys-509, and Cys-566-Cys-580. 4 residues coordinate hydrogencarbonate: Thr-453, Arg-457, Ala-459, and Gly-460. N-linked (GlcNAc...) asparagine glycosylation occurs at Asn-476. Fe(3+) is bound at residue Tyr-520. His-588 is a Fe(3+) binding site.

This sequence belongs to the transferrin family. In terms of assembly, monomer.

The protein resides in the secreted. Its function is as follows. Transferrins are iron binding transport proteins which can bind two Fe(3+) ions in association with the binding of an anion, usually bicarbonate. The polypeptide is Serotransferrin (tf) (Paralichthys olivaceus (Bastard halibut)).